A 24-amino-acid chain; its full sequence is Snake venom metalloproteinase Batx-1 (24 aa).

In terms of domain architecture, Peptidase M12B spans 1 to 24 (YIELAVVADHGIFTKYNSNLNTIR). Glu3 is a binding site for Ca(2+).

The protein belongs to the venom metalloproteinase (M12B) family. P-I subfamily. As to quaternary structure, monomer. Zn(2+) is required as a cofactor. The N-terminus is blocked. Post-translationally, contains 3 disulfide bonds. In terms of tissue distribution, expressed by the venom gland.

Its subcellular location is the secreted. Inhibited by EDTA, and o-phenanthroline, but not inhibited by PMSF, pepstatin A, and aprotinin. Functionally, zinc metalloproteinase that exhits a weak hemorrhagic activity. Degrades preferentially the Aalpha- (FGA) and Bbeta-chains (FGB) of fibrinogen, and partially degrades gamma-chain (FGG) at higher concentration. Induces a mild myotoxicity, but lacks coagulant activity on human plasma or bovin fibrinogen and defibrinating activity. The polypeptide is Snake venom metalloproteinase Batx-1 (Bothrops atrox (Barba amarilla)).